The primary structure comprises 300 residues: Geranylgeranyl pyrophosphate synthase (300 aa).

At Met-1 the chain carries N-acetylmethionine. Lys-25, Arg-28, and His-57 together coordinate isopentenyl diphosphate. The Mg(2+) site is built by Asp-64 and Asp-68. Arg-73 contributes to the dimethylallyl diphosphate binding site. Residue Arg-74 participates in isopentenyl diphosphate binding. Lys-151, Thr-152, Gln-185, Lys-202, and Lys-212 together coordinate dimethylallyl diphosphate.

Belongs to the FPP/GGPP synthase family. Homohexamer; trimer of homodimers. Mg(2+) serves as cofactor.

Its subcellular location is the cytoplasm. The protein localises to the perinuclear region. It is found in the myofibril. The protein resides in the sarcomere. It localises to the z line. It carries out the reaction isopentenyl diphosphate + dimethylallyl diphosphate = (2E)-geranyl diphosphate + diphosphate. The catalysed reaction is isopentenyl diphosphate + (2E)-geranyl diphosphate = (2E,6E)-farnesyl diphosphate + diphosphate. It catalyses the reaction isopentenyl diphosphate + (2E,6E)-farnesyl diphosphate = (2E,6E,10E)-geranylgeranyl diphosphate + diphosphate. Its pathway is isoprenoid biosynthesis; farnesyl diphosphate biosynthesis; farnesyl diphosphate from geranyl diphosphate and isopentenyl diphosphate: step 1/1. It participates in isoprenoid biosynthesis; geranyl diphosphate biosynthesis; geranyl diphosphate from dimethylallyl diphosphate and isopentenyl diphosphate: step 1/1. It functions in the pathway isoprenoid biosynthesis; geranylgeranyl diphosphate biosynthesis; geranylgeranyl diphosphate from farnesyl diphosphate and isopentenyl diphosphate: step 1/1. Functionally, catalyzes the trans-addition of the three molecules of IPP onto DMAPP to form geranylgeranyl pyrophosphate, an important precursor of carotenoids and geranylated proteins. The protein is Geranylgeranyl pyrophosphate synthase (Ggps1) of Rattus norvegicus (Rat).